A 100-amino-acid polypeptide reads, in one-letter code: Ubiquitin-related modifier 1 homolog (100 aa).

Residue Gly-100 is modified to 1-thioglycine. Residue Gly-100 forms a Glycyl lysine isopeptide (Gly-Lys) (interchain with K-? in acceptor proteins) linkage.

This sequence belongs to the URM1 family. C-terminal thiocarboxylation occurs in 2 steps, it is first acyl-adenylated (-COAMP) via the hesA/moeB/thiF part of the MOCS3 homolog, then thiocarboxylated (-COSH) via the rhodanese domain of the MOCS3 homolog.

Its subcellular location is the cytoplasm. It functions in the pathway tRNA modification; 5-methoxycarbonylmethyl-2-thiouridine-tRNA biosynthesis. Functionally, acts as a sulfur carrier required for 2-thiolation of mcm(5)S(2)U at tRNA wobble positions of cytosolic tRNA(Lys), tRNA(Glu) and tRNA(Gln). Serves as sulfur donor in tRNA 2-thiolation reaction by being thiocarboxylated (-COSH) at its C-terminus by MOCS3. The sulfur is then transferred to tRNA to form 2-thiolation of mcm(5)S(2)U. Also acts as a ubiquitin-like protein (UBL) that is covalently conjugated via an isopeptide bond to lysine residues of target proteins. The thiocarboxylated form serves as substrate for conjugation and oxidative stress specifically induces the formation of UBL-protein conjugates. In Oryza sativa subsp. japonica (Rice), this protein is Ubiquitin-related modifier 1 homolog.